Consider the following 765-residue polypeptide: MKWLCSVGVAVSLAMQPALAENLFGNHPLTPEARDAFVTDLLKKMTVDEKIGQLRLISVGPDNPKEAIREMIKDGQVGAIFNTVTRQDIRQMQDQVMALSRLKIPLFFAYDVVHGQRTVFPISLGLASSFNLDAVRTVGRVSAYEAADDGLNMTWAPMVDVSRDPRWGRASEGFGEDTYLTSIMGETMVKAMQGKSPADRYSVMTSVKHFAAYGAVEGGKEYNTVDMSSQRLFNDYMPPYKAGLDAGSGAVMVALNSLNGTPATSDSWLLKDVLRDEWGFKGITVSDHGAIKELIKHGTAADPEDAVRVALKAGVDMSMADEYYSKYLPGLIKSGKVTMAELDDATRHVLNVKYDMGLFNDPYSHLGPKESDPVDTNAESRLHRKEAREVARESVVLLKNRLETLPLKKSGTIAVVGPLADSQRDVMGSWSAAGVANQSVTVLAGIQNAVGDGAKILYAKGANITNDKGIVDFLNLYEEAVKIDPRSPQAMIDEAVQAAKQADVVVAVVGESQGMAHEASSRTNITIPQSQRDLITALKATGKPLVLVLMNGRPLALVKEDQQADAILETWFAGTEGGNAIADVLFGDYNPSGKLPISFPRSVGQIPVYYSHLNTGRPYNPEKPNKYTSRYFDEANGPLYPFGYGLSYTTFTVSDVTLSSPTMQRDGKVTASVEVTNTGKREGATVIQMYLQDVTASMSRPVKQLKGFEKITLKPGERKTVSFPIDIEALKFWNQQMKYDAEPGKFNVFIGVDSARVKQGSFELL.

The signal sequence occupies residues 1-20; the sequence is MKWLCSVGVAVSLAMQPALA. The active site involves Asp-287.

Belongs to the glycosyl hydrolase 3 family.

Its subcellular location is the periplasm. The catalysed reaction is Hydrolysis of terminal, non-reducing beta-D-glucosyl residues with release of beta-D-glucose.. The sequence is that of Periplasmic beta-glucosidase (bglX) from Salmonella typhimurium (strain LT2 / SGSC1412 / ATCC 700720).